The sequence spans 224 residues: UPF0758 protein PST_0473 (224 aa).

The region spanning 102–224 is the MPN domain; it reads ALESPQAVRD…PLSMAEYGWM (123 aa). Residues His-173, His-175, and Asp-186 each contribute to the Zn(2+) site. A JAMM motif motif is present at residues 173–186; that stretch reads HNHPSGVAEPSQAD.

Belongs to the UPF0758 family.

The sequence is that of UPF0758 protein PST_0473 from Stutzerimonas stutzeri (strain A1501) (Pseudomonas stutzeri).